Reading from the N-terminus, the 88-residue chain is Small ribosomal subunit protein uS15 (88 aa).

The protein belongs to the universal ribosomal protein uS15 family. Part of the 30S ribosomal subunit. Forms a bridge to the 50S subunit in the 70S ribosome, contacting the 23S rRNA.

Functionally, one of the primary rRNA binding proteins, it binds directly to 16S rRNA where it helps nucleate assembly of the platform of the 30S subunit by binding and bridging several RNA helices of the 16S rRNA. Its function is as follows. Forms an intersubunit bridge (bridge B4) with the 23S rRNA of the 50S subunit in the ribosome. This is Small ribosomal subunit protein uS15 from Francisella tularensis subsp. novicida (strain U112).